The sequence spans 343 residues: Twinfilin (343 aa).

2 ADF-H domains span residues 4-139 and 177-312; these read QTGI…KHKI and GINC…EELH. Positions 317–343 are disordered; sequence NLRPQFSKPKGPPSRGAKRLTKPQAVE.

This sequence belongs to the actin-binding proteins ADF family. Twinfilin subfamily. As to quaternary structure, interacts with G-actin; ADP-actin form.

Its subcellular location is the cytoplasm. The protein localises to the cytoskeleton. It localises to the cell cortex. Its function is as follows. Actin-binding protein involved in motile and morphological processes. Inhibits actin polymerization, likely by sequestering G-actin. This chain is Twinfilin (twf), found in Aedes aegypti (Yellowfever mosquito).